Here is a 92-residue protein sequence, read N- to C-terminus: Large ribosomal subunit protein eL31 (92 aa).

Residue Ser-2 is modified to N-acetylserine.

It belongs to the eukaryotic ribosomal protein eL31 family. In terms of assembly, part of the 50S ribosomal subunit.

Binds to the 23S rRNA. Located at the polypeptide exit tunnel on the outside of the subunit. The protein is Large ribosomal subunit protein eL31 (rpl31e) of Haloarcula marismortui (strain ATCC 43049 / DSM 3752 / JCM 8966 / VKM B-1809) (Halobacterium marismortui).